The following is a 67-amino-acid chain: Large ribosomal subunit protein bL35 (67 aa).

This sequence belongs to the bacterial ribosomal protein bL35 family.

The sequence is that of Large ribosomal subunit protein bL35 from Allorhizobium ampelinum (strain ATCC BAA-846 / DSM 112012 / S4) (Agrobacterium vitis (strain S4)).